Consider the following 493-residue polypeptide: NADH-quinone oxidoreductase subunit N 2 (493 aa).

14 consecutive transmembrane segments (helical) span residues 16-36, 45-65, 87-107, 119-139, 141-161, 176-196, 219-239, 258-278, 285-305, 313-333, 340-360, 385-405, 421-441, and 464-484; these read IIPA…DFLI, FLLI…FRQQ, GFAI…AIVS, GEYY…ATGT, LITL…MVGF, LLLG…MYGI, VFLA…AVPF, LSVA…LGPL, WEPL…LAAI, LLAY…VAGN, IAVY…VIIA, AFLM…AGFL, GLAI…FKIV, and CALA…EPFL.

This sequence belongs to the complex I subunit 2 family. In terms of assembly, NDH-1 is composed of 14 different subunits. Subunits NuoA, H, J, K, L, M, N constitute the membrane sector of the complex.

The protein localises to the cell inner membrane. It catalyses the reaction a quinone + NADH + 5 H(+)(in) = a quinol + NAD(+) + 4 H(+)(out). In terms of biological role, NDH-1 shuttles electrons from NADH, via FMN and iron-sulfur (Fe-S) centers, to quinones in the respiratory chain. The immediate electron acceptor for the enzyme in this species is believed to be ubiquinone. Couples the redox reaction to proton translocation (for every two electrons transferred, four hydrogen ions are translocated across the cytoplasmic membrane), and thus conserves the redox energy in a proton gradient. This chain is NADH-quinone oxidoreductase subunit N 2, found in Solibacter usitatus (strain Ellin6076).